The primary structure comprises 273 residues: 3-methyl-2-oxobutanoate hydroxymethyltransferase (273 aa).

2 residues coordinate Mg(2+): aspartate 49 and aspartate 88. 3-methyl-2-oxobutanoate is bound by residues 49-50, aspartate 88, and lysine 118; that span reads DS. Mg(2+) is bound at residue glutamate 120. Glutamate 187 serves as the catalytic Proton acceptor.

Belongs to the PanB family. Homodecamer; pentamer of dimers. It depends on Mg(2+) as a cofactor.

It is found in the cytoplasm. The enzyme catalyses 3-methyl-2-oxobutanoate + (6R)-5,10-methylene-5,6,7,8-tetrahydrofolate + H2O = 2-dehydropantoate + (6S)-5,6,7,8-tetrahydrofolate. Its pathway is cofactor biosynthesis; (R)-pantothenate biosynthesis; (R)-pantoate from 3-methyl-2-oxobutanoate: step 1/2. Functionally, catalyzes the reversible reaction in which hydroxymethyl group from 5,10-methylenetetrahydrofolate is transferred onto alpha-ketoisovalerate to form ketopantoate. The polypeptide is 3-methyl-2-oxobutanoate hydroxymethyltransferase (Rhizobium etli (strain ATCC 51251 / DSM 11541 / JCM 21823 / NBRC 15573 / CFN 42)).